The chain runs to 101 residues: MEIDIKNECRKYIIQFRNWLESRYSDNIYFFNVFEDEEIILMQIKINMKKKEYEKAGMSMLKYLVRTFKYPNYIKVNWRYDKNMFKISAICGDINMSESNN.

This is an uncharacterized protein from Saccharolobus islandicus (Sulfolobus islandicus).